A 264-amino-acid chain; its full sequence is Regulator of cytoskeleton and endocytosis RVS161 (264 aa).

Positions 15 to 239 (ASVIVKDVDK…LDPASRDEYA (225 aa)) constitute a BAR domain.

It is found in the cytoplasm. The protein localises to the cytoskeleton. Component of a cytoskeletal structure that is required for the formation of endocytic vesicles at the plasma membrane level. Plays an important role in virulence. The polypeptide is Regulator of cytoskeleton and endocytosis RVS161 (RVS161) (Candida albicans (strain SC5314 / ATCC MYA-2876) (Yeast)).